The primary structure comprises 370 residues: Putative methylthioribose-1-phosphate isomerase (370 aa).

Residues 66–68 (RGA), R109, and Q217 contribute to the substrate site. D258 functions as the Proton donor in the catalytic mechanism. Residue 268–269 (NK) participates in substrate binding.

This sequence belongs to the eIF-2B alpha/beta/delta subunits family. MtnA subfamily.

The enzyme catalyses 5-(methylsulfanyl)-alpha-D-ribose 1-phosphate = 5-(methylsulfanyl)-D-ribulose 1-phosphate. Its function is as follows. Catalyzes the interconversion of methylthioribose-1-phosphate (MTR-1-P) into methylthioribulose-1-phosphate (MTRu-1-P). The polypeptide is Putative methylthioribose-1-phosphate isomerase (Aeropyrum pernix (strain ATCC 700893 / DSM 11879 / JCM 9820 / NBRC 100138 / K1)).